We begin with the raw amino-acid sequence, 67 residues long: Probable Sec-independent protein translocase protein TatE (67 aa).

The helical transmembrane segment at 1 to 21 (MGEISITKLLVVAALVVLLFG) threads the bilayer. The segment at 45–67 (DEDAGAKKDANGDLPAEKLTHKE) is disordered.

The protein belongs to the TatA/E family. TatE subfamily.

Its subcellular location is the cell inner membrane. Its function is as follows. Part of the twin-arginine translocation (Tat) system that transports large folded proteins containing a characteristic twin-arginine motif in their signal peptide across membranes. TatE shares overlapping functions with TatA. This is Probable Sec-independent protein translocase protein TatE from Escherichia fergusonii (strain ATCC 35469 / DSM 13698 / CCUG 18766 / IAM 14443 / JCM 21226 / LMG 7866 / NBRC 102419 / NCTC 12128 / CDC 0568-73).